We begin with the raw amino-acid sequence, 347 residues long: Transcription factor JunB (347 aa).

Glycyl lysine isopeptide (Lys-Gly) (interchain with G-Cter in SUMO2) cross-links involve residues lysine 4, lysine 33, and lysine 36. The segment at 50–77 (LKAPGARGPGPEGNGGGSYFSSQGSDTG) is disordered. Residues 56 to 67 (RGPGPEGNGGGS) show a composition bias toward gly residues. Residues 68 to 77 (YFSSQGSDTG) are compositionally biased toward polar residues. Residue lysine 81 forms a Glycyl lysine isopeptide (Lys-Gly) (interchain with G-Cter in SUMO2) linkage. Threonine 102 and threonine 104 each carry phosphothreonine. Serine 117 is subject to Phosphoserine. Residue lysine 141 forms a Glycyl lysine isopeptide (Lys-Gly) (interchain with G-Cter in SUMO2) linkage. An N6-acetyllysine; alternate modification is found at lysine 240. Residue lysine 240 forms a Glycyl lysine isopeptide (Lys-Gly) (interchain with G-Cter in SUMO1); alternate linkage. Residue lysine 240 forms a Glycyl lysine isopeptide (Lys-Gly) (interchain with G-Cter in SUMO2); alternate linkage. Basic and acidic residues predominate over residues 241-253 (EEPQTVPEARSRD). The segment at 241–260 (EEPQTVPEARSRDATPPVSP) is disordered. Serine 251 is modified (phosphoserine). Threonine 255 is modified (phosphothreonine). Serine 259 is subject to Phosphoserine. Residues 268–295 (RIKVERKRLRNRLAATKCRKRKLERIAR) form a basic motif region. The bZIP domain occupies 268 to 331 (RIKVERKRLR…AQLKQKVMTH (64 aa)). A leucine-zipper region spans residues 296–324 (LEDKVKTLKAENAGLSSTAGLLREQVAQL). Residue lysine 343 forms a Glycyl lysine isopeptide (Lys-Gly) (interchain with G-Cter in SUMO2) linkage.

The protein belongs to the bZIP family. Jun subfamily. Binds DNA as a homodimer or as a heterodimer with another member of the Jun/Fos family. Component of an AP-1 transcription factor complex composed of JUN-FOS heterodimers. As part of the AP-1 transcription factor complex, forms heterodimers with FOSB, thereby binding to the AP-1 consensus sequence and stimulating transcription. Interacts with ITCH (via its WW domains). Post-translationally, ubiquitinated by ITCH, leading to its degradation.

The protein resides in the nucleus. In terms of biological role, transcription factor involved in regulating gene activity following the primary growth factor response. Binds to the DNA sequence 5'-TGA[GC]TCA-3'. Heterodimerizes with proteins of the FOS family to form an AP-1 transcription complex, thereby enhancing its DNA binding activity to an AP-1 consensus sequence and its transcriptional activity. The sequence is that of Transcription factor JunB (JUNB) from Bos taurus (Bovine).